Consider the following 50-residue polypeptide: Defensin-like protein 1 (50 aa).

Disulfide bonds link Cys-2–Cys-50, Cys-14–Cys-35, Cys-20–Cys-44, and Cys-24–Cys-46.

Belongs to the DEFL family.

The protein resides in the secreted. Its function is as follows. Possesses antimicrobial activity sensitive to inorganic cations. Binds specifically to the fungal plasma membrane. Has no inhibitory effect on insect gut alpha-amylase. The protein is Defensin-like protein 1 of Aesculus hippocastanum (Horse chestnut).